Consider the following 369-residue polypeptide: Peptide chain release factor 2 (369 aa).

N5-methylglutamine is present on Q249.

Belongs to the prokaryotic/mitochondrial release factor family. Post-translationally, methylated by PrmC. Methylation increases the termination efficiency of RF2.

It is found in the cytoplasm. Functionally, peptide chain release factor 2 directs the termination of translation in response to the peptide chain termination codons UGA and UAA. The polypeptide is Peptide chain release factor 2 (Thermosipho africanus (strain TCF52B)).